Reading from the N-terminus, the 130-residue chain is Riboflavin kinase (130 aa).

Residue Gly10–Lys15 participates in CDP binding. Thr39 and Asn41 together coordinate Mg(2+). FMN is bound by residues Thr96 and Glu104. Val109–Arg112 is a binding site for CDP.

It belongs to the archaeal riboflavin kinase family. Requires Mg(2+) as cofactor.

It catalyses the reaction riboflavin + CTP = CDP + FMN + H(+). It functions in the pathway cofactor biosynthesis; FMN biosynthesis; FMN from riboflavin (CTP route): step 1/1. Catalyzes the CTP-dependent phosphorylation of riboflavin (vitamin B2) to form flavin mononucleotide (FMN). The protein is Riboflavin kinase of Methanococcus vannielii (strain ATCC 35089 / DSM 1224 / JCM 13029 / OCM 148 / SB).